Reading from the N-terminus, the 221-residue chain is Octanoyltransferase (221 aa).

Residues 14–202 form the BPL/LPL catalytic domain; the sequence is GVRPDTLWFL…MLGARNAPHP (189 aa). Substrate is bound by residues 54-61, 128-130, and 141-143; these read RGGLLTYH, SIG, and GFA. The active-site Acyl-thioester intermediate is the Cys159. Residues 197–221 are disordered; sequence RNAPHPPAPNLSSGDLGTGTRAGRT.

This sequence belongs to the LipB family.

The protein localises to the cytoplasm. It carries out the reaction octanoyl-[ACP] + L-lysyl-[protein] = N(6)-octanoyl-L-lysyl-[protein] + holo-[ACP] + H(+). It participates in protein modification; protein lipoylation via endogenous pathway; protein N(6)-(lipoyl)lysine from octanoyl-[acyl-carrier-protein]: step 1/2. Its function is as follows. Catalyzes the transfer of endogenously produced octanoic acid from octanoyl-acyl-carrier-protein onto the lipoyl domains of lipoate-dependent enzymes. Lipoyl-ACP can also act as a substrate although octanoyl-ACP is likely to be the physiological substrate. The sequence is that of Octanoyltransferase from Frankia casuarinae (strain DSM 45818 / CECT 9043 / HFP020203 / CcI3).